The following is a 200-amino-acid chain: Recombination protein RecR (200 aa).

The segment at 57–72 (CSHCRTFTENERCEIC) adopts a C4-type zinc-finger fold. Positions 81 to 176 (GLLCVVESPA…KVSRIAHGVP (96 aa)) constitute a Toprim domain.

Belongs to the RecR family.

Its function is as follows. May play a role in DNA repair. It seems to be involved in an RecBC-independent recombinational process of DNA repair. It may act with RecF and RecO. The sequence is that of Recombination protein RecR from Aeromonas hydrophila subsp. hydrophila (strain ATCC 7966 / DSM 30187 / BCRC 13018 / CCUG 14551 / JCM 1027 / KCTC 2358 / NCIMB 9240 / NCTC 8049).